The chain runs to 123 residues: Large ribosomal subunit protein uL14c (123 aa).

Belongs to the universal ribosomal protein uL14 family. As to quaternary structure, part of the 50S ribosomal subunit.

Its subcellular location is the plastid. The protein localises to the chloroplast. Functionally, binds to 23S rRNA. The chain is Large ribosomal subunit protein uL14c from Sorghum bicolor (Sorghum).